A 308-amino-acid polypeptide reads, in one-letter code: MNETMKSRFGKVAVMMGGNSCEREISLMSGQGVLNALRGQGVDAHAFDPAEKPLAALQSEGFDRVFIALHGAFGEDGTLQGALETMGIPYTGCGVMASAIGMDKWRSKLVWKAAGLPVPDFRLLADDSDFAAIEAELGLPMFVKPACEGSSLGVTKVRKAGELAQAYAEARKFDPLVLAEQFVGGGEYTVALLEGRALPAIKIEPATEFYDYDAKYFRDDTVYRCPAGMDDEHELAMRRLAEQGFAVLGGSGWGRIDFLVDEAGQPYLLEINTAPGMTTHSLVPMAAREAGLTYEALCLKVLEAAHVG.

The 196-residue stretch at 108-303 (KLVWKAAGLP…YEALCLKVLE (196 aa)) folds into the ATP-grasp domain. Position 134–189 (134–189 (EAELGLPMFVKPACEGSSLGVTKVRKAGELAQAYAEARKFDPLVLAEQFVGGGEYT)) interacts with ATP. Aspartate 257, glutamate 270, and asparagine 272 together coordinate Mg(2+).

This sequence belongs to the D-alanine--D-alanine ligase family. Mg(2+) serves as cofactor. The cofactor is Mn(2+).

The protein localises to the cytoplasm. It catalyses the reaction 2 D-alanine + ATP = D-alanyl-D-alanine + ADP + phosphate + H(+). It functions in the pathway cell wall biogenesis; peptidoglycan biosynthesis. Cell wall formation. This Laribacter hongkongensis (strain HLHK9) protein is D-alanine--D-alanine ligase.